Reading from the N-terminus, the 205-residue chain is Protein N-terminal glutamine amidohydrolase (205 aa).

Residues Cys-20, His-74, and Asp-90 contribute to the active site.

Belongs to the NTAQ1 family. As to quaternary structure, monomer.

It catalyses the reaction N-terminal L-glutaminyl-[protein] + H2O = N-terminal L-glutamyl-[protein] + NH4(+). Its function is as follows. Mediates the side-chain deamidation of N-terminal glutamine residues to glutamate, an important step in N-end rule pathway of protein degradation. Conversion of the resulting N-terminal glutamine to glutamate renders the protein susceptible to arginylation, polyubiquitination and degradation as specified by the N-end rule. Does not act on substrates with internal or C-terminal glutamine and does not act on non-glutamine residues in any position. The chain is Protein N-terminal glutamine amidohydrolase (tun) from Drosophila pseudoobscura pseudoobscura (Fruit fly).